The sequence spans 363 residues: Neutral protease 2 homolog NFIA_102630 (363 aa).

The first 19 residues, 1–19, serve as a signal peptide directing secretion; it reads MKVTVLASAILALINGALA. A propeptide spanning residues 20–172 is cleaved from the precursor; sequence LPANAPTLDV…PQAIKLLDRR (153 aa). Intrachain disulfides connect Cys-178–Cys-250 and Cys-257–Cys-275. His-300 contacts Zn(2+). The active site involves Glu-301. Residues His-304 and Asp-315 each contribute to the Zn(2+) site.

Belongs to the peptidase M35 family. It depends on Zn(2+) as a cofactor.

The protein localises to the secreted. It catalyses the reaction Preferential cleavage of bonds with hydrophobic residues in P1'. Also 3-Asn-|-Gln-4 and 8-Gly-|-Ser-9 bonds in insulin B chain.. Its function is as follows. Secreted metalloproteinase that allows assimilation of proteinaceous substrates. Shows high activities on basic nuclear substrates such as histone and protamine. The polypeptide is Neutral protease 2 homolog NFIA_102630 (Neosartorya fischeri (strain ATCC 1020 / DSM 3700 / CBS 544.65 / FGSC A1164 / JCM 1740 / NRRL 181 / WB 181) (Aspergillus fischerianus)).